We begin with the raw amino-acid sequence, 764 residues long: Thyrotropin receptor (764 aa).

The first 20 residues, 1–20, serve as a signal peptide directing secretion; it reads MRPPPLLHLALLLALPRSLG. Residues 21 to 413 lie on the Extracellular side of the membrane; sequence GKGCPSPPCE…EFNPCEDIMG (393 aa). Residues Cys-31 and Cys-41 are joined by a disulfide bond. N-linked (GlcNAc...) asparagine glycosylation is found at Asn-77 and Asn-99. 6 LRR repeats span residues 125–149, 150–174, 176–199, 201–223, 225–248, and 250–271; these read LPLL…KVYS, TDVF…AFQG, CNET…AFNG, KLDA…AFGG, YSGP…GLEH, and KELI…SFLH. N-linked (GlcNAc...) asparagine glycosylation is found at Asn-177 and Asn-198. N-linked (GlcNAc...) asparagine glycosylation is present at Asn-302. Tyr-385 is subject to Sulfotyrosine. Residues 414–441 form a helical membrane-spanning segment; sequence YKFLRIVVWFVSLLALLGNVFVLIVLLT. Residues 442–450 lie on the Cytoplasmic side of the membrane; that stretch reads SHYKLTVPR. A helical transmembrane segment spans residues 451–473; sequence FLMCNLAFADFCMGMYLLLIASV. Over 474–494 the chain is Extracellular; the sequence is DLYTHSEYYNHAIDWQTGPGC. Cys-494 and Cys-569 form a disulfide bridge. A helical transmembrane segment spans residues 495–517; the sequence is NTAGFFTVFASELSVYTLTVITL. Topologically, residues 518–537 are cytoplasmic; sequence ERWYAITFAMRLDRKIRLRH. Residues 538 to 560 traverse the membrane as a helical segment; the sequence is AYAIMVGGWVCCFLLALLPLVGI. At 561-580 the chain is on the extracellular side; sequence SSYAKVSICLPMDTETPLAL. Residues 581-602 form a helical membrane-spanning segment; that stretch reads AYIILVLLLNIVAFIIVCSCYV. The Cytoplasmic portion of the chain corresponds to 603-625; that stretch reads KIYITVRNPQYNPGDKDTKIAKR. A helical transmembrane segment spans residues 626-649; sequence MAVLIFTDFMCMAPISFYALSALM. The Extracellular portion of the chain corresponds to 650-660; that stretch reads NKPLITVTNSK. The helical transmembrane segment at 661–682 threads the bilayer; the sequence is ILLVLFYPLNSCANPFLYAIFT. The Cytoplasmic portion of the chain corresponds to 683–764; the sequence is KAFQRDVFIL…ISKEYNQTVL (82 aa). A PDZ-binding motif is present at residues 762-764; sequence TVL.

Belongs to the G-protein coupled receptor 1 family. FSH/LSH/TSH subfamily. As to quaternary structure, interacts with heterodimer GPHA2:GPHB5; this interaction stimulates cAMP production. Interacts (via the PDZ-binding motif) with SCRIB; regulates TSHR trafficking and function. Post-translationally, glycosylated. In terms of processing, sulfated. Sulfation on Tyr-385 plays a role in thyrotropin receptor binding and activation.

It is found in the cell membrane. Its subcellular location is the basolateral cell membrane. Receptor for the thyroid-stimulating hormone (TSH) or thyrotropin. Also acts as a receptor for the heterodimeric glycoprotein hormone (GPHA2:GPHB5) or thyrostimulin. The activity of this receptor is mediated by G proteins which activate adenylate cyclase. Plays a central role in controlling thyroid cell metabolism. The polypeptide is Thyrotropin receptor (TSHR) (Canis lupus familiaris (Dog)).